Consider the following 358-residue polypeptide: Protein-glutamate methylesterase/protein-glutamine glutaminase (358 aa).

The region spanning 5–122 is the Response regulatory domain; sequence SVLIIDDSAL…RNSLEAYTDE (118 aa). Residue aspartate 56 is modified to 4-aspartylphosphate. Residues 159–351 form the CheB-type methylesterase domain; that stretch reads GISTEKLIII…RRILARLVGA (193 aa). Active-site residues include serine 171, histidine 197, and aspartate 293.

Belongs to the CheB family. Phosphorylated by CheA. Phosphorylation of the N-terminal regulatory domain activates the methylesterase activity.

Its subcellular location is the cytoplasm. The catalysed reaction is [protein]-L-glutamate 5-O-methyl ester + H2O = L-glutamyl-[protein] + methanol + H(+). The enzyme catalyses L-glutaminyl-[protein] + H2O = L-glutamyl-[protein] + NH4(+). Involved in chemotaxis. Part of a chemotaxis signal transduction system that modulates chemotaxis in response to various stimuli. Catalyzes the demethylation of specific methylglutamate residues introduced into the chemoreceptors (methyl-accepting chemotaxis proteins or MCP) by CheR. Also mediates the irreversible deamidation of specific glutamine residues to glutamic acid. This Nitrosomonas europaea (strain ATCC 19718 / CIP 103999 / KCTC 2705 / NBRC 14298) protein is Protein-glutamate methylesterase/protein-glutamine glutaminase.